The sequence spans 290 residues: Ribosomal RNA small subunit methyltransferase A (290 aa).

S-adenosyl-L-methionine is bound by residues Asn27, Leu29, Gly54, Glu75, Asp100, and Asn125.

Belongs to the class I-like SAM-binding methyltransferase superfamily. rRNA adenine N(6)-methyltransferase family. RsmA subfamily.

The protein localises to the cytoplasm. The catalysed reaction is adenosine(1518)/adenosine(1519) in 16S rRNA + 4 S-adenosyl-L-methionine = N(6)-dimethyladenosine(1518)/N(6)-dimethyladenosine(1519) in 16S rRNA + 4 S-adenosyl-L-homocysteine + 4 H(+). In terms of biological role, specifically dimethylates two adjacent adenosines (A1518 and A1519) in the loop of a conserved hairpin near the 3'-end of 16S rRNA in the 30S particle. May play a critical role in biogenesis of 30S subunits. The chain is Ribosomal RNA small subunit methyltransferase A from Streptococcus agalactiae serotype V (strain ATCC BAA-611 / 2603 V/R).